We begin with the raw amino-acid sequence, 427 residues long: UBX domain-containing protein 10 (427 aa).

Residues 247–311 (LERFRSEREA…VQKKKKQYRA (65 aa)) adopt a coiled-coil conformation. Residues 323–425 (SEDEPARLSI…FPNGTVVVEL (103 aa)) enclose the UBX domain.

Its subcellular location is the endoplasmic reticulum. Its function is as follows. Involved in protein degradation through the ubiquitin/proteasome pathway. In Schizosaccharomyces pombe (strain 972 / ATCC 24843) (Fission yeast), this protein is UBX domain-containing protein 10 (ucp10).